We begin with the raw amino-acid sequence, 111 residues long: RNA polymerase-binding protein RbpA (111 aa).

Belongs to the RNA polymerase-binding protein RbpA family. Forms a complex with the RNAP catalytic core and with free principal sigma factors.

Its function is as follows. Binds to RNA polymerase (RNAP), stimulating transcription from principal, but not alternative sigma factor promoters. This is RNA polymerase-binding protein RbpA from Mycobacterium tuberculosis (strain CDC 1551 / Oshkosh).